The chain runs to 380 residues: Glycine betaine/carnitine/choline transport ATP-binding protein OpuCA (380 aa).

In terms of domain architecture, ABC transporter spans leucine 2–isoleucine 236. Glycine 35–threonine 42 provides a ligand contact to ATP. CBS domains lie at methionine 255–valine 314 and tyrosine 315–glutamate 373.

It belongs to the ABC transporter superfamily. In terms of assembly, the complex is composed of two ATP-binding proteins (OpuCA), two transmembrane proteins (OpuCB and OpuCD) and a solute-binding protein (OpuCC).

Binds cyclic di-AMP (c-di-AMP), which may regulate the transporter activity. In terms of biological role, involved in a high affinity multicomponent binding-protein-dependent transport system for glycine betaine, carnitine and choline; probably responsible for energy coupling to the transport system. The polypeptide is Glycine betaine/carnitine/choline transport ATP-binding protein OpuCA (opuCA) (Bacillus subtilis (strain 168)).